We begin with the raw amino-acid sequence, 396 residues long: MQSKTLYLKATALLGGCTVFAATALAVTSTATRPQLSSADARTYTIAKYLASFGTIGSLTTDNWDPTGGVGAVSGFRANYAVAADGTAQYKTVQAAIDAAVNAGGVARRYISVKAGIYNELVCVPESAPPITLYGLDANAGNTQIVYNNANPTPASGAKTNPCMGTSSNATVGTLRSATAMVRASDFHARNLTFKNSYVEGTYADNNQSAVALAVRGDKAILENVSVIGNQDTLFVGATSTTTVIRAYFKNSFIQGDTDFIFGAGTAVFHGCTIQYTAARLGAKAASYIFAPSTAPGNPYGFLAINSTFNATGNPPNNSLHLGRAWDQSVSGTSAYINGSSPNGQVVIRDSSLGALIRLADPWGPSTAGRPYCSANCAYSANRFFEYNNTGAGSGN.

The N-terminal stretch at 1 to 21 (MQSKTLYLKATALLGGCTVFA) is a signal peptide. A substrate-binding site is contributed by Thr-174. Residue Asp-232 is the Proton donor of the active site. The Nucleophile role is filled by Asp-259. Substrate is bound by residues Arg-324 and Trp-326.

This sequence belongs to the pectinesterase family.

The protein localises to the secreted. The enzyme catalyses [(1-&gt;4)-alpha-D-galacturonosyl methyl ester](n) + n H2O = [(1-&gt;4)-alpha-D-galacturonosyl](n) + n methanol + n H(+). It participates in glycan metabolism; pectin degradation; 2-dehydro-3-deoxy-D-gluconate from pectin: step 1/5. Involved in maceration and soft-rotting of plant tissue. This is Pectinesterase (pme) from Ralstonia nicotianae (strain ATCC BAA-1114 / GMI1000) (Ralstonia solanacearum).